Reading from the N-terminus, the 345-residue chain is Golgi-associated RAB2 interactor protein 1B (345 aa).

Disordered regions lie at residues 222–241 (CSPS…SQPS) and 271–299 (SRSS…PCTR). The segment covering 275–285 (KKTENKKDSSG) has biased composition (basic and acidic residues).

Belongs to the GARIN family.

It is found in the golgi apparatus. In terms of biological role, RAB2B effector protein required for accurate acrosome formation and normal male fertility. In complex with RAB2A/RAB2B, seems to suppress excessive vesicle trafficking during acrosome formation. The sequence is that of Golgi-associated RAB2 interactor protein 1B (GARIN1B) from Bos taurus (Bovine).